A 456-amino-acid polypeptide reads, in one-letter code: Keratin, type I cuticular Ha8 (456 aa).

The segment at 1 to 104 is head; it reads MTSSYSSSSC…YGENTLNGHE (104 aa). Residues 104 to 415 enclose the IF rod domain; sequence EKETMQFLND…NLLESEDCKL (312 aa). Residues 105 to 139 are coil 1A; the sequence is KETMQFLNDRLANYLEKVRQLEQENAELEATLLER. Positions 140 to 150 are linker 1; the sequence is SKCHESTVCPD. A coil 1B region spans residues 151–251; it reads YQSYFHTIEE…HEQEVKILRS (101 aa). The segment at 252–267 is linker 12; that stretch reads QLGEKLRIELDIEPTI. The segment at 268–411 is coil 2; it reads DLNRVLGEMR…ATYRNLLESE (144 aa). Residues 412-456 are tail; sequence DCKLPCNPCSTSPSCVTAPCAPRPSCGPCTTCGPTCGASTTGSRF.

This sequence belongs to the intermediate filament family.

The chain is Keratin, type I cuticular Ha8 (KRT38) from Homo sapiens (Human).